Reading from the N-terminus, the 130-residue chain is Glycine cleavage system H protein (130 aa).

The region spanning 23–105 (IGIIGITDFA…YGKGWMIKVE (83 aa)) is the Lipoyl-binding domain. Position 64 is an N6-lipoyllysine (K64).

It belongs to the GcvH family. As to quaternary structure, the glycine cleavage system is composed of four proteins: P, T, L and H. (R)-lipoate serves as cofactor.

Its function is as follows. The glycine cleavage system catalyzes the degradation of glycine. The H protein shuttles the methylamine group of glycine from the P protein to the T protein. In Carboxydothermus hydrogenoformans (strain ATCC BAA-161 / DSM 6008 / Z-2901), this protein is Glycine cleavage system H protein.